The primary structure comprises 327 residues: Undecaprenyl-phosphate 4-deoxy-4-formamido-L-arabinose transferase (327 aa).

2 helical membrane-spanning segments follow: residues 235–255 (LLSLVGSAIALLGFTFSVLLV) and 270–290 (VFTLFAVLFMFIGAQFVGMGL).

The protein belongs to the glycosyltransferase 2 family.

Its subcellular location is the cell inner membrane. The catalysed reaction is UDP-4-deoxy-4-formamido-beta-L-arabinose + di-trans,octa-cis-undecaprenyl phosphate = 4-deoxy-4-formamido-alpha-L-arabinopyranosyl di-trans,octa-cis-undecaprenyl phosphate + UDP. It functions in the pathway glycolipid biosynthesis; 4-amino-4-deoxy-alpha-L-arabinose undecaprenyl phosphate biosynthesis; 4-amino-4-deoxy-alpha-L-arabinose undecaprenyl phosphate from UDP-4-deoxy-4-formamido-beta-L-arabinose and undecaprenyl phosphate: step 1/2. The protein operates within bacterial outer membrane biogenesis; lipopolysaccharide biosynthesis. Catalyzes the transfer of 4-deoxy-4-formamido-L-arabinose from UDP to undecaprenyl phosphate. The modified arabinose is attached to lipid A and is required for resistance to polymyxin and cationic antimicrobial peptides. The polypeptide is Undecaprenyl-phosphate 4-deoxy-4-formamido-L-arabinose transferase (Yersinia pseudotuberculosis serotype IB (strain PB1/+)).